The chain runs to 175 residues: Cell number regulator 9 (175 aa).

Transmembrane regions (helical) follow at residues 53 to 73 and 80 to 100; these read GLCC…AEIV and CGVA…HWIY.

This sequence belongs to the cornifelin family. In terms of tissue distribution, expressed in roots, coleoptiles, leaves and stalks.

It is found in the membrane. The protein is Cell number regulator 9 (CNR9) of Zea mays (Maize).